A 121-amino-acid chain; its full sequence is MIQQETFLTVADNSGAKRIQCIRVLGTNRRYAHVGDVIVATVKDAMPNMGVKKSDIVKAVVVRTKATMRRDTGNSIRFDDNAAVIINDDKNPKGTRVFGPVARELRERSFTKIVSLAPEVI.

Belongs to the universal ribosomal protein uL14 family. In terms of assembly, part of the 50S ribosomal subunit. Forms a cluster with proteins L3 and L19. In the 70S ribosome, L14 and L19 interact and together make contacts with the 16S rRNA in bridges B5 and B8.

Binds to 23S rRNA. Forms part of two intersubunit bridges in the 70S ribosome. The polypeptide is Large ribosomal subunit protein uL14 (Synechococcus sp. (strain CC9311)).